The primary structure comprises 54 residues: Large ribosomal subunit protein bL33A (54 aa).

This sequence belongs to the bacterial ribosomal protein bL33 family.

This is Large ribosomal subunit protein bL33A from Streptomyces avermitilis (strain ATCC 31267 / DSM 46492 / JCM 5070 / NBRC 14893 / NCIMB 12804 / NRRL 8165 / MA-4680).